Reading from the N-terminus, the 317-residue chain is Taste receptor type 2 member 14 (317 aa).

Residues Met-1 to Ser-7 are Extracellular-facing. Residues Ile-8–Ala-28 form a helical membrane-spanning segment. The Cytoplasmic portion of the chain corresponds to Leu-29–Arg-55. The chain crosses the membrane as a helical span at residues Ile-56–Phe-76. At Ala-77 to Asn-87 the chain is on the extracellular side. Cholesterol is bound by residues Thr-86 and Trp-89. A helical membrane pass occupies residues Ile-88 to Phe-108. The Cytoplasmic segment spans residues Leu-109–Val-129. A helical membrane pass occupies residues Val-130–Ile-150. The Extracellular portion of the chain corresponds to His-151–Thr-184. Residues Asn-153, Asn-162, and Asn-171 are each glycosylated (N-linked (GlcNAc...) asparagine). Val-180 serves as a coordination point for cholesterol. A helical transmembrane segment spans residues Val-185–Met-205. The Cytoplasmic portion of the chain corresponds to Trp-206–Ser-232. A helical membrane pass occupies residues Val-233–Thr-253. Topologically, residues Ser-254–Leu-261 are extracellular. The chain crosses the membrane as a helical span at residues Ile-262 to Leu-282. The cholesterol site is built by Ser-265 and Met-268. Residues Gly-283–Ser-317 are Cytoplasmic-facing.

This sequence belongs to the G-protein coupled receptor T2R family. As to quaternary structure, core component of the TAS2R14-GNAI1 complex, consisting of TAS2R14, GNAI1, GNB1 and GNG2; within the complex interacts with GNAI1. Core component of the TAS2R14-GNAT3 complex, consisting of TAS2R14, GNAT3, GNB1 and GNG2; within the complex interacts with GNAT3. Core component of the TAS2R14-GNAS2 complex, consisting of TAS2R14, GNAS2, GNB1 and GNG2; within the complex interacts with GNAS2. As to expression, highly expressed in cerebellum, pancreas, small intestine and thymus; also expressed in adipose, aorta, skin and tongue, but at significantly lower levels. Expressed in subsets of taste receptor cells of the tongue and palate epithelium and exclusively in gustducin-positive cells. Expressed in testis.

It localises to the membrane. The catalysed reaction is Ca(2+)(in) = Ca(2+)(out). The enzyme catalyses 3',5'-cyclic AMP(in) = 3',5'-cyclic AMP(out). Its activity is regulated as follows. Basal activity is enhanced by binding to bitter tastants, such as flufenamic acid and aristolochic acid. Regulated by cholesterol in a concentration-dependent manner. Functionally, gustducin-linked G-protein coupled receptor that plays a role in the perception of bitterness. The activity of this receptor stimulates GNAT3, activating the gustducin G-protein pathway. Likely plays a role in sensing the chemical composition of the gastrointestinal content and other extra-oral tissues via the inhibitory G-protein pathways. In Homo sapiens (Human), this protein is Taste receptor type 2 member 14 (TAS2R14).